The following is a 179-amino-acid chain: Adenine phosphoribosyltransferase (179 aa).

This sequence belongs to the purine/pyrimidine phosphoribosyltransferase family. As to quaternary structure, homodimer.

The protein resides in the cytoplasm. The catalysed reaction is AMP + diphosphate = 5-phospho-alpha-D-ribose 1-diphosphate + adenine. Its pathway is purine metabolism; AMP biosynthesis via salvage pathway; AMP from adenine: step 1/1. Functionally, catalyzes a salvage reaction resulting in the formation of AMP, that is energically less costly than de novo synthesis. The sequence is that of Adenine phosphoribosyltransferase from Nitrobacter hamburgensis (strain DSM 10229 / NCIMB 13809 / X14).